Consider the following 117-residue polypeptide: LIM and senescent cell antigen-like-containing domain protein 3 (117 aa).

The 48-residue stretch at 70–117 (ATCERCKGGFAPAETIVNSNGELYHEQCFVCAQCFQQFPEGLFYEERT) folds into the LIM zinc-binding domain.

As to expression, detected in testis.

The protein resides in the cytoplasm. This chain is LIM and senescent cell antigen-like-containing domain protein 3 (LIMS3), found in Homo sapiens (Human).